Here is a 523-residue protein sequence, read N- to C-terminus: Translation initiation factor eIF2B subunit delta (523 aa).

The disordered stretch occupies residues 1-147; the sequence is MAAVAVAVRE…PSGVKRLPEY (147 aa). At alanine 2 the chain carries N-acetylalanine. A Phosphoserine modification is found at serine 12. The span at 30 to 40 shows a compositional bias: basic and acidic residues; that stretch reads EMTKEEKLQLR. The span at 41 to 51 shows a compositional bias: basic residues; it reads KEKKQQKKKRK. Threonine 86 carries the post-translational modification Phosphothreonine. The span at 87-121 shows a compositional bias: basic and acidic residues; that stretch reads PREKVPAGRSKAELRAERRAKQEAERALKQARKGE. Serine 130 is modified (phosphoserine). Residues 170 to 179 form a may bind the chemical integrated stress response (ISR) inhibitor ISRIB region; it reads RKDYGSKVSL.

This sequence belongs to the eIF-2B alpha/beta/delta subunits family. As to quaternary structure, component of the translation initiation factor 2B (eIF2B) complex which is a heterodecamer of two sets of five different subunits: alpha, beta, gamma, delta and epsilon. Subunits alpha, beta and delta comprise a regulatory subcomplex and subunits epsilon and gamma comprise a catalytic subcomplex. Within the complex, the hexameric regulatory complex resides at the center, with the two heterodimeric catalytic subcomplexes bound on opposite sides.

The protein resides in the cytoplasm. It is found in the cytosol. With respect to regulation, activated by the chemical integrated stress response (ISR) inhibitor ISRIB which stimulates guanine nucleotide exchange factor activity for both phosphorylated and unphosphorylated eIF2. Its function is as follows. Acts as a component of the translation initiation factor 2B (eIF2B) complex, which catalyzes the exchange of GDP for GTP on eukaryotic initiation factor 2 (eIF2) gamma subunit. Its guanine nucleotide exchange factor activity is repressed when bound to eIF2 complex phosphorylated on the alpha subunit, thereby limiting the amount of methionyl-initiator methionine tRNA available to the ribosome and consequently global translation is repressed. The sequence is that of Translation initiation factor eIF2B subunit delta (EIF2B4) from Homo sapiens (Human).